Reading from the N-terminus, the 211-residue chain is Thymidylate kinase (211 aa).

7 to 14 (GIDASGKS) provides a ligand contact to ATP.

It belongs to the thymidylate kinase family.

It carries out the reaction dTMP + ATP = dTDP + ADP. In terms of biological role, phosphorylation of dTMP to form dTDP in both de novo and salvage pathways of dTTP synthesis. This chain is Thymidylate kinase, found in Mesomycoplasma hyopneumoniae (strain 232) (Mycoplasma hyopneumoniae).